The following is a 314-amino-acid chain: MGLEAARELECAALGTLLRDPREAERTLLLDCRPFLAFCRRHVRAARPVPWNALLRRRARGPPAAVLACLLPDRALRTRLVRGELARAVVLDEGSASVAELRPDSPAHVLLAALLHETRAGPTAVYFLRGGFDGFQGCCPDLCSEAPAPALPPTGDKTSRSDSRAPVYDQGGPVEILPYLFLGSCSHSSDLQGLQACGITAVLNVSASCPNHFEGLFRYKSIPVEDNQMVEISAWFQEAIGFIDWVKNSGGRVLVHCQAGISRSATICLAYLMQSRRVRLDEAFDFVKQRRGVISPNFSFMGQLLQFETQVLCH.

One can recognise a Rhodanese domain in the interval 23-144; sequence EAERTLLLDC…FQGCCPDLCS (122 aa). Positions 172 to 313 constitute a Tyrosine-protein phosphatase domain; sequence GPVEILPYLF…LLQFETQVLC (142 aa). Cys257 serves as the catalytic Phosphocysteine intermediate.

This sequence belongs to the protein-tyrosine phosphatase family. Non-receptor class dual specificity subfamily. As to quaternary structure, interacts with MAPK14; this interaction does not lead to catalytic activation of DUSP2 and dephosphrylation of MAPK14. In terms of tissue distribution, expressed in hematopoietic tissues.

It is found in the nucleus. The catalysed reaction is O-phospho-L-tyrosyl-[protein] + H2O = L-tyrosyl-[protein] + phosphate. It carries out the reaction O-phospho-L-threonyl-[protein] + H2O = L-threonyl-[protein] + phosphate. Functionally, dephosphorylates both phosphorylated Thr and Tyr residues in MAPK1, and dephosphorylation of phosphotyrosine is slightly faster than that of phosphothreonine. Can dephosphorylate MAPK1. The chain is Dual specificity protein phosphatase 2 from Homo sapiens (Human).